The chain runs to 378 residues: Chaperone protein DnaJ (378 aa).

Residues 5 to 70 (DFYEVLGLSK…QKRAAYDQYG (66 aa)) enclose the J domain. A CR-type zinc finger spans residues 133 to 211 (GITKEIRIPT…CHGDGRVERY (79 aa)). Cys-146, Cys-149, Cys-163, Cys-166, Cys-185, Cys-188, Cys-199, and Cys-202 together coordinate Zn(2+). 4 CXXCXGXG motif repeats span residues 146–153 (CDKCHGSG), 163–170 (CSTCHGAG), 185–192 (CPTCHGRG), and 199–206 (CSKCHGDG).

Belongs to the DnaJ family. In terms of assembly, homodimer. Zn(2+) serves as cofactor.

Its subcellular location is the cytoplasm. Functionally, participates actively in the response to hyperosmotic and heat shock by preventing the aggregation of stress-denatured proteins and by disaggregating proteins, also in an autonomous, DnaK-independent fashion. Unfolded proteins bind initially to DnaJ; upon interaction with the DnaJ-bound protein, DnaK hydrolyzes its bound ATP, resulting in the formation of a stable complex. GrpE releases ADP from DnaK; ATP binding to DnaK triggers the release of the substrate protein, thus completing the reaction cycle. Several rounds of ATP-dependent interactions between DnaJ, DnaK and GrpE are required for fully efficient folding. Also involved, together with DnaK and GrpE, in the DNA replication of plasmids through activation of initiation proteins. The polypeptide is Chaperone protein DnaJ (Proteus mirabilis (strain HI4320)).